Consider the following 109-residue polypeptide: Flagellar hook-basal body complex protein FliE (109 aa).

This sequence belongs to the FliE family.

It is found in the bacterial flagellum basal body. This chain is Flagellar hook-basal body complex protein FliE, found in Pseudomonas syringae pv. tomato (strain ATCC BAA-871 / DC3000).